A 489-amino-acid polypeptide reads, in one-letter code: uncharacterized protein (489 aa).

This is an uncharacterized protein from Bacillus subtilis (strain 168).